We begin with the raw amino-acid sequence, 199 residues long: Early activation antigen CD69 (199 aa).

Residues methionine 1–phenylalanine 29 form a disordered region. Residues methionine 1–proline 40 are Cytoplasmic-facing. Residues valine 41 to leucine 61 traverse the membrane as a helical; Signal-anchor for type II membrane protein segment. The Extracellular segment spans residues serine 62–lysine 199. 3 cysteine pairs are disulfide-bonded: cysteine 85–cysteine 96, cysteine 113–cysteine 194, and cysteine 173–cysteine 186. Positions tyrosine 92–asparagine 195 constitute a C-type lectin domain. Asparagine 166 carries an N-linked (GlcNAc...) asparagine glycan.

Homodimer; disulfide-linked. Interacts with S100A8 and S100A9. Interacts with galactin-1/LGALS1. Interacts with S1PR1; this interaction mediates S1PR1 degradation. In terms of processing, constitutive Ser/Thr phosphorylation in both mature thymocytes and activated T-lymphocytes. In terms of tissue distribution, expressed on the surface of activated T-cells, B-cells, natural killer cells, neutrophils, eosinophils, epidermal Langerhans cells and platelets.

The protein localises to the cell membrane. In terms of biological role, transmembrane protein expressed mainly on T-cells resident in mucosa that plays an essential role in immune cell homeostasis. Rapidly expressed on the surface of platelets, T-lymphocytes and NK cells upon activation by various stimuli, such as antigen recognition or cytokine signaling, stimulates different signaling pathways in different cell types. Negatively regulates Th17 cell differentiation through its carbohydrate dependent interaction with galectin-1/LGALS1 present on immature dendritic cells. Association of CD69 cytoplasmic tail with the JAK3/STAT5 signaling pathway regulates the transcription of RORgamma/RORC and, consequently, differentiation toward the Th17 lineage. Also acts via the S100A8/S100A9 complex present on peripheral blood mononuclear cells to promote the conversion of naive CD4 T-cells into regulatory T-cells. Acts as an oxidized low-density lipoprotein (oxLDL) receptor in CD4 T-lymphocytes and negatively regulates the inflammatory response by inducing the expression of PDCD1 through the activation of NFAT. Participates in adipose tissue-derived mesenchymal stem cells (ASCs)-mediated protection against P.aeruginosa infection. Mechanistically, specifically recognizes P.aeruginosa to promote ERK1 activation, followed by granulocyte-macrophage colony-stimulating factor (GM-CSF) and other inflammatory cytokines secretion. In eosinophils, induces IL-10 production through the ERK1/2 pathway. Negatively regulates the chemotactic responses of effector lymphocytes and dendritic cells (DCs) to sphingosine 1 phosphate/S1P by acting as a S1PR1 receptor agonist and facilitating the internalization and degradation of the receptor. The chain is Early activation antigen CD69 (CD69) from Homo sapiens (Human).